Here is a 430-residue protein sequence, read N- to C-terminus: 5-methylthioadenosine/S-adenosylhomocysteine deaminase (430 aa).

Residues H63 and H65 each coordinate Zn(2+). Positions 92, 144, and 182 each coordinate substrate. H209 contacts Zn(2+). Residues E212 and D297 each coordinate substrate. D297 lines the Zn(2+) pocket.

It belongs to the metallo-dependent hydrolases superfamily. MTA/SAH deaminase family. The cofactor is Zn(2+).

The catalysed reaction is S-adenosyl-L-homocysteine + H2O + H(+) = S-inosyl-L-homocysteine + NH4(+). It carries out the reaction S-methyl-5'-thioadenosine + H2O + H(+) = S-methyl-5'-thioinosine + NH4(+). Functionally, catalyzes the deamination of 5-methylthioadenosine and S-adenosyl-L-homocysteine into 5-methylthioinosine and S-inosyl-L-homocysteine, respectively. Is also able to deaminate adenosine. The polypeptide is 5-methylthioadenosine/S-adenosylhomocysteine deaminase (Desulforudis audaxviator (strain MP104C)).